The chain runs to 527 residues: Transcription initiation factor TFIID subunit 6b (527 aa).

Residues 3 to 99 (TKESIEVIAQ…NLEPTSGSKS (97 aa)) enclose the Histone-fold domain. Disordered stretches follow at residues 410-442 (SPPT…THQP) and 462-492 (MRGT…PKTS). Polar residues-rich tracts occupy residues 416–427 (VWKTNGKLTSPR) and 462–473 (MRGTTTVPQQSH).

This sequence belongs to the TAF6 family. In terms of assembly, component of the TFIID complex. TFIID is composed of TATA binding protein (TBP) and a number of TBP-associated factors (TAFs) whose MWs range from 14-217 kDa. Interacts with TAF5 and TAF9. In terms of tissue distribution, expressed in roots, leaves, inflorescences and siliques.

It is found in the nucleus. In terms of biological role, TAFs are components of the transcription factor IID (TFIID) complex that is essential for mediating regulation of RNA polymerase transcription. Not redundant with TAF6. The chain is Transcription initiation factor TFIID subunit 6b (TAF6B) from Arabidopsis thaliana (Mouse-ear cress).